The following is a 183-amino-acid chain: Putative manganese efflux pump MntP 1 (183 aa).

The next 6 helical transmembrane spans lie at 6-26 (LFLL…CIGI), 36-56 (IIFV…GGYI), 64-84 (IVPI…ILMI), 100-120 (IMYL…GFTT), 130-150 (LFMS…LGII), and 158-178 (ISII…LFGL).

It belongs to the MntP (TC 9.B.29) family.

It is found in the cell membrane. Its function is as follows. Probably functions as a manganese efflux pump. The polypeptide is Putative manganese efflux pump MntP 1 (Clostridium botulinum (strain Langeland / NCTC 10281 / Type F)).